The following is a 252-amino-acid chain: MIRTKISAENLNLFYGDFHALKDINISMGERQVTALIGPSGCGKSTFLRCLNRMNDIIPTCRVQGKLMFEDSEIYHPDTDVVALRKRVGMVFQAPNPFPKSVYENVAYAPKLHGLKDKARLDEIVETSLRQAALWDEVKDRLHKPALGLSGGQQQRLCIARALAIQPEVLLMDEPTSALDPISTLKIEELIRELKQYYTIVIVTHNMQQAARISDKTAFFLVGDLVEFDDTEVIFTNPKDQRTEDYITGRFG.

Positions 6–247 (ISAENLNLFY…PKDQRTEDYI (242 aa)) constitute an ABC transporter domain. 38–45 (GPSGCGKS) contributes to the ATP binding site.

The protein belongs to the ABC transporter superfamily. Phosphate importer (TC 3.A.1.7) family. In terms of assembly, the complex is composed of two ATP-binding proteins (PstB), two transmembrane proteins (PstC and PstA) and a solute-binding protein (PstS).

The protein localises to the cell membrane. The catalysed reaction is phosphate(out) + ATP + H2O = ADP + 2 phosphate(in) + H(+). Part of the ABC transporter complex PstSACB involved in phosphate import. Responsible for energy coupling to the transport system. The chain is Phosphate import ATP-binding protein PstB from Heliobacterium mobile (Heliobacillus mobilis).